We begin with the raw amino-acid sequence, 885 residues long: Alanine--tRNA ligase (885 aa).

His-571, His-575, Cys-674, and His-678 together coordinate Zn(2+).

Belongs to the class-II aminoacyl-tRNA synthetase family. Requires Zn(2+) as cofactor.

The protein localises to the cytoplasm. The enzyme catalyses tRNA(Ala) + L-alanine + ATP = L-alanyl-tRNA(Ala) + AMP + diphosphate. Catalyzes the attachment of alanine to tRNA(Ala) in a two-step reaction: alanine is first activated by ATP to form Ala-AMP and then transferred to the acceptor end of tRNA(Ala). Also edits incorrectly charged Ser-tRNA(Ala) and Gly-tRNA(Ala) via its editing domain. In Clavibacter sepedonicus (Clavibacter michiganensis subsp. sepedonicus), this protein is Alanine--tRNA ligase.